Here is a 159-residue protein sequence, read N- to C-terminus: Vesicle transport protein SFT2A (159 aa).

At 1–36 (MEKLRRVLSGQDDEEQGLTAQVLDASSLSFNTRLKW) the chain is on the cytoplasmic side. Ser9 bears the Phosphoserine mark. The helical transmembrane segment at 37–57 (FAICFVCGVFFSILGTGLLWL) threads the bilayer. The Lumenal portion of the chain corresponds to 58 to 62 (PGGIK). The helical transmembrane segment at 63–83 (LFAVFYTLGNLAALASTCFLM) threads the bilayer. Residues 84 to 97 (GPVKQLKKMFEATR) are Cytoplasmic-facing. Residues 98–118 (LLATIVMLLCFIFTLCAALWW) form a helical membrane-spanning segment. Residues 119–122 (HKKG) are Lumenal-facing. A helical membrane pass occupies residues 123–143 (LAVLFCILQFLSMTWYSLSYI). Over 144–159 (PYARDAVIKCCSSLLS) the chain is Cytoplasmic.

This sequence belongs to the SFT2 family.

It localises to the membrane. Its function is as follows. May be involved in fusion of retrograde transport vesicles derived from an endocytic compartment with the Golgi complex. In Homo sapiens (Human), this protein is Vesicle transport protein SFT2A.